Reading from the N-terminus, the 449-residue chain is CCAAT/enhancer-binding protein (449 aa).

Disordered stretches follow at residues His-211–Glu-233, Gly-276–Gln-302, and Ser-334–Val-386. Composition is skewed to low complexity over residues Asn-215–Ser-229, Asn-280–Ser-301, and Gln-339–Gln-349. The span at Lys-357–Arg-368 shows a compositional bias: basic and acidic residues. Positions Thr-363–Leu-426 constitute a bZIP domain. The basic motif stretch occupies residues Arg-367–Lys-396. Residues Leu-398–Leu-405 form a leucine-zipper region.

It belongs to the bZIP family. C/EBP subfamily. As to quaternary structure, binds DNA as a dimer and can form stable heterodimers. Interacts with trbl. Ubiquitination/deubiquitination regulates border cell migration. Ubiquitination is stimulated by trbl, which leads to proteasomal degradation and inhibits border cell migration. Deubiquitination by Usp47, leads to its stabilization and promotes border cell migration.

The protein resides in the nucleus. Required for the expression of gene products mediating border cell migration. Among the DNA sequences that this protein binds with high affinity is a conserved site within the promoter of its gene. In Drosophila melanogaster (Fruit fly), this protein is CCAAT/enhancer-binding protein (slbo).